The following is a 190-amino-acid chain: dCTP deaminase (190 aa).

Position 113–118 (113–118) interacts with dCTP; that stretch reads KSTYAR. Glutamate 139 acts as the Proton donor/acceptor in catalysis. DCTP-binding residues include glutamine 158, tyrosine 172, lysine 181, and glutamine 182.

The protein belongs to the dCTP deaminase family. Homotrimer.

The catalysed reaction is dCTP + H2O + H(+) = dUTP + NH4(+). It functions in the pathway pyrimidine metabolism; dUMP biosynthesis; dUMP from dCTP (dUTP route): step 1/2. Its function is as follows. Catalyzes the deamination of dCTP to dUTP. This chain is dCTP deaminase, found in Chlamydia caviae (strain ATCC VR-813 / DSM 19441 / 03DC25 / GPIC) (Chlamydophila caviae).